The primary structure comprises 217 residues: Proteasome subunit beta type-6-B like protein (217 aa).

A propeptide spans 1 to 16 (MERHFMDSQIKGVSTG) (removed in mature form). Thr-17 functions as the Nucleophile in the catalytic mechanism.

The protein belongs to the peptidase T1B family. As to quaternary structure, the 26S proteasome consists of a 20S proteasome core and two 19S regulatory subunits. The 20S proteasome core is composed of 28 subunits that are arranged in four stacked rings, resulting in a barrel-shaped structure. The two end rings are each formed by seven alpha subunits, and the two central rings are each formed by seven beta subunits. The catalytic chamber with the active sites is on the inside of the barrel.

The protein resides in the cytoplasm. It is found in the nucleus. It carries out the reaction Cleavage of peptide bonds with very broad specificity.. In terms of biological role, the proteasome is a multicatalytic proteinase complex which is characterized by its ability to cleave peptides with Arg, Phe, Tyr, Leu, and Glu adjacent to the leaving group at neutral or slightly basic pH. The proteasome has an ATP-dependent proteolytic activity. This subunit is involved in antigen processing to generate class I binding peptides. The polypeptide is Proteasome subunit beta type-6-B like protein (psmb6l-b) (Salmo salar (Atlantic salmon)).